Here is a 90-residue protein sequence, read N- to C-terminus: Probable Fe(2+)-trafficking protein (90 aa).

It belongs to the Fe(2+)-trafficking protein family.

In terms of biological role, could be a mediator in iron transactions between iron acquisition and iron-requiring processes, such as synthesis and/or repair of Fe-S clusters in biosynthetic enzymes. The polypeptide is Probable Fe(2+)-trafficking protein (Bordetella bronchiseptica (strain ATCC BAA-588 / NCTC 13252 / RB50) (Alcaligenes bronchisepticus)).